We begin with the raw amino-acid sequence, 80 residues long: Large ribosomal subunit protein uL24 (80 aa).

A disordered region spans residues 53–80 (HMKPTQSHPQGSIIEREFPIHASNVKKS).

Belongs to the universal ribosomal protein uL24 family. As to quaternary structure, part of the 50S ribosomal subunit.

One of two assembly initiator proteins, it binds directly to the 5'-end of the 23S rRNA, where it nucleates assembly of the 50S subunit. Functionally, one of the proteins that surrounds the polypeptide exit tunnel on the outside of the subunit. This Chlorobium limicola (strain DSM 245 / NBRC 103803 / 6330) protein is Large ribosomal subunit protein uL24.